Consider the following 284-residue polypeptide: Tropomyosin (284 aa).

A coiled-coil region spans residues 1 to 284; the sequence is MDAIKKKMVA…DATFAELAGY (284 aa). Residues 32 to 41 are compositionally biased toward basic and acidic residues; it reads TEEAKAKIED. The interval 32–60 is disordered; the sequence is TEEAKAKIEDDYNSLQKKSIQTENDLDNT. The span at 44–60 shows a compositional bias: polar residues; it reads NSLQKKSIQTENDLDNT.

This sequence belongs to the tropomyosin family. In terms of assembly, homodimer.

Functionally, tropomyosin, in association with the troponin complex, plays a central role in the calcium dependent regulation of muscle contraction. The protein is Tropomyosin of Mytilus edulis (Blue mussel).